The sequence spans 335 residues: GTPase Obg (335 aa).

One can recognise an Obg domain in the interval Met1–Met159. In terms of domain architecture, OBG-type G spans Ala160–Ser323. GTP contacts are provided by residues Gly166–Ser173, Phe191–Val195, Asp213–Gly216, Thr280–Asp283, and Ser304–Val306. Residues Ser173 and Thr193 each coordinate Mg(2+).

It belongs to the TRAFAC class OBG-HflX-like GTPase superfamily. OBG GTPase family. Monomer. Mg(2+) serves as cofactor.

It localises to the cytoplasm. An essential GTPase which binds GTP, GDP and possibly (p)ppGpp with moderate affinity, with high nucleotide exchange rates and a fairly low GTP hydrolysis rate. Plays a role in control of the cell cycle, stress response, ribosome biogenesis and in those bacteria that undergo differentiation, in morphogenesis control. The polypeptide is GTPase Obg (Chlorobaculum parvum (strain DSM 263 / NCIMB 8327) (Chlorobium vibrioforme subsp. thiosulfatophilum)).